We begin with the raw amino-acid sequence, 396 residues long: tRNA-specific 2-thiouridylase MnmA (396 aa).

Residues 35 to 42 and Leu-61 contribute to the ATP site; that span reads GLSGGVDS. Cys-122 acts as the Nucleophile in catalysis. An intrachain disulfide couples Cys-122 to Cys-221. Gly-147 provides a ligand contact to ATP. Residues 171-173 form an interaction with tRNA region; it reads KDQ. Cys-221 acts as the Cysteine persulfide intermediate in catalysis. Residues 326 to 327 are interaction with tRNA; sequence RY.

Belongs to the MnmA/TRMU family.

It is found in the cytoplasm. The enzyme catalyses S-sulfanyl-L-cysteinyl-[protein] + uridine(34) in tRNA + AH2 + ATP = 2-thiouridine(34) in tRNA + L-cysteinyl-[protein] + A + AMP + diphosphate + H(+). In terms of biological role, catalyzes the 2-thiolation of uridine at the wobble position (U34) of tRNA, leading to the formation of s(2)U34. In Parasynechococcus marenigrum (strain WH8102), this protein is tRNA-specific 2-thiouridylase MnmA.